The chain runs to 164 residues: C-phycoerythrin alpha chain (164 aa).

Residues Cys82 and Cys139 each contribute to the (2R,3E)-phycoerythrobilin site.

This sequence belongs to the phycobiliprotein family. In terms of assembly, heterodimer of an alpha and a beta chain. Contains two covalently linked bilin chromophores.

It is found in the cellular thylakoid membrane. Light-harvesting photosynthetic bile pigment-protein from the phycobiliprotein complex. This Microchaete diplosiphon (Fremyella diplosiphon) protein is C-phycoerythrin alpha chain (cpeA).